The sequence spans 166 residues: Orofacial cleft 1 candidate gene 1 protein homolog (166 aa).

A disordered region spans residues Met1–Ala22.

The protein is Orofacial cleft 1 candidate gene 1 protein homolog (Ofcc1) of Mus musculus (Mouse).